Consider the following 798-residue polypeptide: Phenylalanine--tRNA ligase beta subunit (798 aa).

The tRNA-binding domain maps to 38 to 148; sequence IGNYEKVVVG…PEAPVGEKIE (111 aa). Residues 400 to 475 enclose the B5 domain; sequence FTPKVIAVSL…RYLGYNNFPD (76 aa). Residues D453, D459, E462, and E463 each coordinate Mg(2+). The 94-residue stretch at 703-796 folds into the FDX-ACB domain; that stretch reads SPYPEVKRDI…LEAKTGAKLR (94 aa).

It belongs to the phenylalanyl-tRNA synthetase beta subunit family. Type 1 subfamily. Tetramer of two alpha and two beta subunits. The cofactor is Mg(2+).

It is found in the cytoplasm. It carries out the reaction tRNA(Phe) + L-phenylalanine + ATP = L-phenylalanyl-tRNA(Phe) + AMP + diphosphate + H(+). This Carboxydothermus hydrogenoformans (strain ATCC BAA-161 / DSM 6008 / Z-2901) protein is Phenylalanine--tRNA ligase beta subunit.